The chain runs to 191 residues: UPF0312 protein Pmen_0419 (191 aa).

The signal sequence occupies residues 1–22 (MLKNALAALVLGSALIGGQAMA).

The protein belongs to the UPF0312 family. Type 1 subfamily.

Its subcellular location is the periplasm. The sequence is that of UPF0312 protein Pmen_0419 from Ectopseudomonas mendocina (strain ymp) (Pseudomonas mendocina).